Consider the following 213-residue polypeptide: MKSLQALFGGTFDPVHYGHLKPVETLANLIGLSRVIIMPNNVPPHRPQPEASSAQRKYMLELAIDDKPLFTLDERELQRNAPSYTAQTLKAWREEQGPEAPLAFIIGQDSLLNFPTWHDYDTILDNTHLIVCRRPGYPLEMTQAQHQQWLEQHLTHTPDDLHQLPAGKIYLAETPWLNISATLIRERLEKGESCDDLLPENVLNYINQQGLYR.

The protein belongs to the NadD family.

The enzyme catalyses nicotinate beta-D-ribonucleotide + ATP + H(+) = deamido-NAD(+) + diphosphate. It participates in cofactor biosynthesis; NAD(+) biosynthesis; deamido-NAD(+) from nicotinate D-ribonucleotide: step 1/1. Catalyzes the reversible adenylation of nicotinate mononucleotide (NaMN) to nicotinic acid adenine dinucleotide (NaAD). This Salmonella gallinarum (strain 287/91 / NCTC 13346) protein is Probable nicotinate-nucleotide adenylyltransferase.